A 278-amino-acid chain; its full sequence is Tryptophan synthase alpha chain (278 aa).

Catalysis depends on proton acceptor residues glutamate 49 and aspartate 60.

It belongs to the TrpA family. In terms of assembly, tetramer of two alpha and two beta chains.

It carries out the reaction (1S,2R)-1-C-(indol-3-yl)glycerol 3-phosphate + L-serine = D-glyceraldehyde 3-phosphate + L-tryptophan + H2O. Its pathway is amino-acid biosynthesis; L-tryptophan biosynthesis; L-tryptophan from chorismate: step 5/5. Functionally, the alpha subunit is responsible for the aldol cleavage of indoleglycerol phosphate to indole and glyceraldehyde 3-phosphate. This Psychrobacter arcticus (strain DSM 17307 / VKM B-2377 / 273-4) protein is Tryptophan synthase alpha chain.